The primary structure comprises 351 residues: uncharacterized protein (351 aa).

Positions 1–27 are cleaved as a signal peptide; it reads MKNKKRVLIASSLSCAILLLSAATTQA. The disordered stretch occupies residues 29–71; sequence SAHKDSQDQNKKEHVDKSQQKDKRNVTNKDKNSTVPDDIGKNG. Over residues 30–60 the composition is skewed to basic and acidic residues; it reads AHKDSQDQNKKEHVDKSQQKDKRNVTNKDKN.

This sequence belongs to the aerolysin family.

This is an uncharacterized protein from Staphylococcus aureus (strain Mu50 / ATCC 700699).